Here is a 972-residue protein sequence, read N- to C-terminus: DNA cross-link repair 1A protein (972 aa).

Residues 14–80 are disordered; that stretch reads YKSIRKRKPQ…SEDLDPCKDD (67 aa). Residues 23-37 show a composition bias toward polar residues; sequence QSNPDSTSVSMQTVT. The span at 39–54 shows a compositional bias: basic residues; it reads GKCRPKRKGSGNRKKS. Positions 64–80 are enriched in basic and acidic residues; sequence SEQRLRPSEDLDPCKDD. A UBZ4-type zinc finger spans residues 105–135; the sequence is DGYCPSCQMPFSLLVVQTPRWHVAECLDTPG. Residues cysteine 108, cysteine 111, histidine 126, and cysteine 130 each contribute to the Zn(2+) site. 2 disordered regions span residues 191 to 219 and 552 to 623; these read KSSC…NNEC and GEAC…TTDE. The segment covering 210-219 has biased composition (polar residues); sequence NLKNVPNNEC.

This sequence belongs to the DNA repair metallo-beta-lactamase (DRMBL) family. As to quaternary structure, binds PIAS1.

The protein localises to the nucleus. It catalyses the reaction a beta-lactam + H2O = a substituted beta-amino acid. May be required for DNA interstrand cross-link repair. The protein is DNA cross-link repair 1A protein (DCLRE1A) of Gallus gallus (Chicken).